We begin with the raw amino-acid sequence, 615 residues long: Elongation factor 4 (615 aa).

The 187-residue stretch at 14-200 (SKIRNFCIIA…KVAELIPAPT (187 aa)) folds into the tr-type G domain. Residues 26-31 (DHGKST) and 147-150 (NKID) contribute to the GTP site.

It belongs to the TRAFAC class translation factor GTPase superfamily. Classic translation factor GTPase family. LepA subfamily.

The protein resides in the cell membrane. The enzyme catalyses GTP + H2O = GDP + phosphate + H(+). In terms of biological role, required for accurate and efficient protein synthesis under certain stress conditions. May act as a fidelity factor of the translation reaction, by catalyzing a one-codon backward translocation of tRNAs on improperly translocated ribosomes. Back-translocation proceeds from a post-translocation (POST) complex to a pre-translocation (PRE) complex, thus giving elongation factor G a second chance to translocate the tRNAs correctly. Binds to ribosomes in a GTP-dependent manner. The protein is Elongation factor 4 of Corynebacterium aurimucosum (strain ATCC 700975 / DSM 44827 / CIP 107346 / CN-1) (Corynebacterium nigricans).